Here is a 407-residue protein sequence, read N- to C-terminus: Digeranylgeranylglycerophospholipid reductase (407 aa).

The FAD site is built by Ala15, Glu34, Cys45, Ala46, Gly48, Arg99, Ala123, Asp281, Gly293, and Ile294.

This sequence belongs to the geranylgeranyl reductase family. DGGGPL reductase subfamily. Requires FAD as cofactor.

It catalyses the reaction a 2,3-bis-O-phytanyl-sn-glycerol 1-phospholipid + 8 oxidized 2[4Fe-4S]-[ferredoxin] = a 2,3-bis-O-(geranylgeranyl)-sn-glycerol 1-phospholipid + 8 reduced 2[4Fe-4S]-[ferredoxin] + 16 H(+). It carries out the reaction 2,3-bis-O-(phytanyl)-sn-glycerol 1-phosphate + 8 oxidized 2[4Fe-4S]-[ferredoxin] = 2,3-bis-O-(geranylgeranyl)-sn-glycerol 1-phosphate + 8 reduced 2[4Fe-4S]-[ferredoxin] + 16 H(+). The catalysed reaction is a 2,3-bis-O-phytanyl-sn-glycerol 1-phospholipid + 8 A = a 2,3-bis-O-(geranylgeranyl)-sn-glycerol 1-phospholipid + 8 AH2. The enzyme catalyses CDP-2,3-bis-O-(geranylgeranyl)-sn-glycerol + 8 AH2 = CDP-2,3-bis-O-(phytanyl)-sn-glycerol + 8 A. It catalyses the reaction archaetidylserine + 8 AH2 = 2,3-bis-O-phytanyl-sn-glycero-3-phospho-L-serine + 8 A. Its pathway is membrane lipid metabolism; glycerophospholipid metabolism. Functionally, is involved in the reduction of 2,3-digeranylgeranylglycerophospholipids (unsaturated archaeols) into 2,3-diphytanylglycerophospholipids (saturated archaeols) in the biosynthesis of archaeal membrane lipids. Catalyzes the formation of archaetidic acid (2,3-di-O-phytanyl-sn-glyceryl phosphate) from 2,3-di-O-geranylgeranylglyceryl phosphate (DGGGP) via the hydrogenation of each double bond of the isoprenoid chains. Is also probably able to reduce double bonds of geranyl groups in CDP-2,3-bis-O-(geranylgeranyl)-sn-glycerol and archaetidylserine, thus acting at various stages in the biosynthesis of archaeal membrane lipids. The sequence is that of Digeranylgeranylglycerophospholipid reductase from Methanosarcina mazei (strain ATCC BAA-159 / DSM 3647 / Goe1 / Go1 / JCM 11833 / OCM 88) (Methanosarcina frisia).